The sequence spans 165 residues: Ribosome maturation factor RimM (165 aa).

In terms of domain architecture, PRC barrel spans 94-165 (EDEFYIADLT…YVILNYQREA (72 aa)).

Belongs to the RimM family. In terms of assembly, binds ribosomal protein uS19.

The protein resides in the cytoplasm. An accessory protein needed during the final step in the assembly of 30S ribosomal subunit, possibly for assembly of the head region. Essential for efficient processing of 16S rRNA. May be needed both before and after RbfA during the maturation of 16S rRNA. It has affinity for free ribosomal 30S subunits but not for 70S ribosomes. The protein is Ribosome maturation factor RimM of Rickettsia rickettsii (strain Iowa).